Reading from the N-terminus, the 318-residue chain is NADH-ubiquinone oxidoreductase chain 1 (318 aa).

8 helical membrane passes run 2 to 22 (FMLN…FLTL), 68 to 88 (ITMF…MWIP), 100 to 120 (LGVL…LWSG), 147 to 167 (AIIL…TLII), 171 to 191 (YIWL…STLA), 217 to 237 (GGPF…MNAL), 254 to 273 (LYTT…FLWI), and 294 to 314 (LPLT…MAGI).

The protein belongs to the complex I subunit 1 family.

It localises to the mitochondrion inner membrane. The enzyme catalyses a ubiquinone + NADH + 5 H(+)(in) = a ubiquinol + NAD(+) + 4 H(+)(out). Core subunit of the mitochondrial membrane respiratory chain NADH dehydrogenase (Complex I) that is believed to belong to the minimal assembly required for catalysis. Complex I functions in the transfer of electrons from NADH to the respiratory chain. The immediate electron acceptor for the enzyme is believed to be ubiquinone. The protein is NADH-ubiquinone oxidoreductase chain 1 (MT-ND1) of Hsunycteris thomasi (Thomas's nectar bat).